We begin with the raw amino-acid sequence, 156 residues long: Protein OXIDATIVE STRESS 3 LIKE 3 (156 aa).

Residues 1-67 (MHYQEQMESL…GLSKHYKGKS (67 aa)) form a disordered region. A compositionally biased stretch (basic and acidic residues) spans 13-26 (GEERRRGNYTRDVD).

It is found in the nucleus. Promotes slightly the tolerance to oxidizing chemicals (e.g. diamide). The protein is Protein OXIDATIVE STRESS 3 LIKE 3 of Arabidopsis thaliana (Mouse-ear cress).